A 490-amino-acid polypeptide reads, in one-letter code: Colicin-10 (490 aa).

Residues 1–20 show a composition bias toward polar residues; the sequence is MDKVTDNSPDVESTESTEGS. Disordered stretches follow at residues 1-29 and 146-171; these read MDKV…VDTG and QKAR…EIAR. Over residues 146–170 the composition is skewed to basic and acidic residues; sequence QKAREEAEAAEKALREAERQRDEIA. The helical transmembrane segment at 447-467 threads the bilayer; the sequence is IVALMFSFIVGAPLGFWGIAI.

This sequence belongs to the channel forming colicin family.

Its subcellular location is the host membrane. In terms of biological role, this colicin is a channel-forming colicin. This class of transmembrane toxins depolarize the cytoplasmic membrane, leading to dissipation of cellular energy. Colicins are polypeptide toxins produced by and active against E.coli and closely related bacteria. The polypeptide is Colicin-10 (cta) (Escherichia coli).